Consider the following 360-residue polypeptide: UPF0283 membrane protein Oant_2119 (360 aa).

The tract at residues 1 to 30 (MTEKTPRKPASFTVSQASNRPEAADEAPRR) is disordered. Helical transmembrane passes span 77–97 (ILFGALGILVSFAIGIWTEDL) and 108–128 (LGWTALGVAIIALAAFIAIVV).

The protein belongs to the UPF0283 family.

The protein localises to the cell inner membrane. This chain is UPF0283 membrane protein Oant_2119, found in Brucella anthropi (strain ATCC 49188 / DSM 6882 / CCUG 24695 / JCM 21032 / LMG 3331 / NBRC 15819 / NCTC 12168 / Alc 37) (Ochrobactrum anthropi).